Here is a 601-residue protein sequence, read N- to C-terminus: Glutathione-regulated potassium-efflux system protein KefB (601 aa).

Helical transmembrane passes span 4 to 24 (ADLL…VPLA), 29 to 49 (IGAV…GLGF), 55 to 75 (EILH…GLEL), 87 to 107 (IFGV…GLLM), 111 to 131 (FLWQ…TAMA), 152 to 172 (VLLF…LLAG), 177 to 197 (HFDW…LIGG), 207 to 227 (FIAA…LVLS), 230 to 250 (LFMD…GVLL), 262 to 282 (AIDP…GMSL), 284 to 304 (LGVL…LVVI), 324 to 344 (MQFA…FSTA), and 356 to 376 (ALLL…MKGI). One can recognise an RCK N-terminal domain in the interval 400–519 (KPQVIVVGFG…AGVTQFSRET (120 aa)).

It belongs to the monovalent cation:proton antiporter 2 (CPA2) transporter (TC 2.A.37) family. KefB subfamily. In terms of assembly, interacts with the regulatory subunit KefG.

The protein resides in the cell inner membrane. Pore-forming subunit of a potassium efflux system that confers protection against electrophiles. Catalyzes K(+)/H(+) antiport. This Salmonella paratyphi B (strain ATCC BAA-1250 / SPB7) protein is Glutathione-regulated potassium-efflux system protein KefB.